The primary structure comprises 354 residues: Homer protein homolog 1 (354 aa).

Residues 1–110 form the WH1 domain; sequence MGEQPIFSTR…EKFQEFKEAA (110 aa). The residue at position 2 (Gly-2) is an N-acetylglycine. Residues 114–172 form a disordered region; it reads KEKSQEKMELTSTPSQESAGGDLQSPLTPESINGTDDERTPDLTQNSEPRPEPTQNALP. Composition is skewed to polar residues over residues 138–147 and 155–172; these read SPLTPESING and DLTQNSEPRPEPTQNALP. Positions 181–352 form a coiled coil; the sequence is KHWEAELATL…LRDNLAKLLE (172 aa). Residues 290 to 354 form a required for tetramerization region; sequence KLQEVEIRNK…DNLAKLLERS (65 aa). The residue at position 306 (Ser-306) is a Phosphoserine.

The protein belongs to the Homer family. Tetramer; this tetrameric structure is critical for forming the high-order complex with SHANK1, which in turn is necessary for the structural and functional integrity of dendritic spines. Interacts with GRM1, GRM5, ITPR1, DNM3, RYR1, RYR2 and SHANK3. Interacts with IFT57 and OPHN1. Encodes a coiled-coil structure that mediates homo- and heteromultimerization. Interacts with SHANK1; forms high-order polymerized complex with a mesh-like network structure, at least composed of SHANK1, HOMER1 and DLGAP1; the complex formation is SHANK1 multimerization dependent. Interacts with NFATC4. Interacts with DAGLA (via PPXXF motif); this interaction is required for the cell membrane localization of DAGLA. Interacts with SRGAP2.

The protein localises to the cytoplasm. Its subcellular location is the postsynaptic density. It is found in the synapse. The protein resides in the cell projection. It localises to the dendritic spine. Functionally, postsynaptic density scaffolding protein. Binds and cross-links cytoplasmic regions of GRM1, GRM5, ITPR1, DNM3, RYR1, RYR2, SHANK1 and SHANK3. By physically linking GRM1 and GRM5 with ER-associated ITPR1 receptors, it aids the coupling of surface receptors to intracellular calcium release. May also couple GRM1 to PI3 kinase through its interaction with AGAP2. Forms a high-order complex with SHANK1, which in turn is necessary for the structural and functional integrity of dendritic spines. Negatively regulates T cell activation by inhibiting the calcineurin-NFAT pathway. Acts by competing with calcineurin/PPP3CA for NFAT protein binding, hence preventing NFAT activation by PPP3CA. The protein is Homer protein homolog 1 of Bos taurus (Bovine).